The chain runs to 131 residues: Protein TIFY 5A (131 aa).

Positions Leu9–Leu13 match the EAR motif. Disordered stretches follow at residues Phe14 to Gln44 and Arg74 to Arg131. Residues Thr16 to Ser34 show a composition bias toward low complexity. Residues Pro39–Arg74 form the Tify domain. Positions Lys79 to Pro100 are enriched in polar residues. Positions Ser105 to Tyr127 match the Jas motif. The Nuclear localization signal motif lies at Met106 to Phe113. Positions Gln122–Arg131 are enriched in polar residues.

Belongs to the TIFY/JAZ family. As to quaternary structure, interacts with TPL and weakly with COI1, but not with AFPH2/NINJA. Interacts with MYC2, MYB21, MYB24, TIFY10A/JAZ1, TIFY10B/JAZ2, TIFY6B/JAZ3, TIFY6A/JAZ4, TIFY11A/JAZ5, TIFY11B/JAZ6, TIFY7/JAZ9, TIFY9/JAZ10 and TIFY3B/JAZ12. Interacts with RHD6 and RSL1. (Microbial infection) Interacts with the pathogenic Pseudomonas syringae HopZ1a protein. (Microbial infection) Acetylated by Pseudomonas syringae HopZ1a. In terms of processing, ubiquitinated.

It is found in the nucleus. Functionally, repressor of jasmonate responses. Unable to associate strongly with COI1 in the presence of jasmonoyl-isoleucine (JA-Ile) and is therefore more resistant to JA-mediated-degradation than other TIFY/JAZ proteins. Repress gene expression through direct recruitment of the corepressor TOPLESS to cognate transcription factors. Interacts with and suppresses RHD6 and RSL1 transcription factor activities to negatively regulate jasmonate-stimulated root hair development. This Arabidopsis thaliana (Mouse-ear cress) protein is Protein TIFY 5A.